The primary structure comprises 493 residues: 3-octaprenyl-4-hydroxybenzoate carboxy-lyase (493 aa).

Position 172 (Asn-172) interacts with Mn(2+). Prenylated FMN contacts are provided by residues 175-177 (IYR), 189-191 (RWL), and 194-195 (RG). Glu-238 is a binding site for Mn(2+). The Proton donor role is filled by Asp-287.

It belongs to the UbiD family. In terms of assembly, homohexamer. The cofactor is prenylated FMN. Requires Mn(2+) as cofactor.

It is found in the cell membrane. The catalysed reaction is a 4-hydroxy-3-(all-trans-polyprenyl)benzoate + H(+) = a 2-(all-trans-polyprenyl)phenol + CO2. Its pathway is cofactor biosynthesis; ubiquinone biosynthesis. Catalyzes the decarboxylation of 3-octaprenyl-4-hydroxy benzoate to 2-octaprenylphenol, an intermediate step in ubiquinone biosynthesis. The chain is 3-octaprenyl-4-hydroxybenzoate carboxy-lyase from Shewanella loihica (strain ATCC BAA-1088 / PV-4).